Reading from the N-terminus, the 974-residue chain is Serine/threonine-protein kinase 10 (974 aa).

Positions 37-295 (WEIIGELGDG…AAQLLEHPFV (259 aa)) constitute a Protein kinase domain. Residues 43 to 51 (LGDGAFGKV) and Lys-66 each bind ATP. Asp-158 acts as the Proton acceptor in catalysis. Acidic residues predominate over residues 320–332 (EDNHEDGEDEDPA). The disordered stretch occupies residues 320 to 479 (EDNHEDGEDE…EKEDHCEETQ (160 aa)). Residues 343 to 353 (DPSQTSATSLN) show a composition bias toward polar residues. Composition is skewed to basic and acidic residues over residues 382–406 (PLKE…ESEA) and 458–477 (TMEK…HCEE). Coiled coils occupy residues 605–729 (QKEQ…EEQK) and 870–950 (EKVK…EHLK).

This sequence belongs to the protein kinase superfamily. STE Ser/Thr protein kinase family. STE20 subfamily. As to quaternary structure, homodimer. In terms of processing, autophosphorylates.

Its subcellular location is the cell membrane. It catalyses the reaction L-seryl-[protein] + ATP = O-phospho-L-seryl-[protein] + ADP + H(+). The catalysed reaction is L-threonyl-[protein] + ATP = O-phospho-L-threonyl-[protein] + ADP + H(+). May act as a polo kinase kinase by mediating phosphorylation of plk1. The sequence is that of Serine/threonine-protein kinase 10 (stk10) from Danio rerio (Zebrafish).